Reading from the N-terminus, the 315-residue chain is Putative steroid dehydrogenase 2 (315 aa).

Residue alanine 47 to isoleucine 76 participates in NADP(+) binding. Tyrosine 202 is a catalytic residue.

Belongs to the short-chain dehydrogenases/reductases (SDR) family. 17-beta-HSD 3 subfamily.

In Caenorhabditis elegans, this protein is Putative steroid dehydrogenase 2 (stdh-2).